The sequence spans 413 residues: Succinate--CoA ligase [ADP-forming] subunit beta, mitochondrial (413 aa).

A mitochondrion-targeting transit peptide spans 1–2; sequence RR. Residues 11–238 form the ATP-grasp domain; the sequence is MGLLQEAGIS…SNSAYRQKKI (228 aa). Residues K48 and 55–57 contribute to the ATP site; that span reads GRG. Mg(2+)-binding residues include N208 and D222. Substrate contacts are provided by residues N273 and 330–332; that span reads GIM.

Belongs to the succinate/malate CoA ligase beta subunit family. ATP-specific subunit beta subfamily. As to quaternary structure, heterodimer of an alpha and a beta subunit. The beta subunit determines specificity for ATP. It depends on Mg(2+) as a cofactor. Widely expressed. Not present in liver.

The protein localises to the mitochondrion. It catalyses the reaction succinate + ATP + CoA = succinyl-CoA + ADP + phosphate. The protein operates within carbohydrate metabolism; tricarboxylic acid cycle; succinate from succinyl-CoA (ligase route): step 1/1. In terms of biological role, ATP-specific succinyl-CoA synthetase functions in the citric acid cycle (TCA), coupling the hydrolysis of succinyl-CoA to the synthesis of ATP and thus represents the only step of substrate-level phosphorylation in the TCA. The beta subunit provides nucleotide specificity of the enzyme and binds the substrate succinate, while the binding sites for coenzyme A and phosphate are found in the alpha subunit. The chain is Succinate--CoA ligase [ADP-forming] subunit beta, mitochondrial from Columba livia (Rock dove).